The chain runs to 122 residues: Large ribosomal subunit protein bL19c (122 aa).

The protein belongs to the bacterial ribosomal protein bL19 family.

The protein resides in the plastid. The protein localises to the chloroplast. In Gracilaria tenuistipitata var. liui (Red alga), this protein is Large ribosomal subunit protein bL19c.